We begin with the raw amino-acid sequence, 101 residues long: MAKTSMKAREAKRAALVAKYAEKRAALKAIINSPESSDDARWDAVLKLQALPRDSSAARQRNRCNQTGRPHGFLRKFGLSRIKLREATMRGEVPGLRKASW.

It belongs to the universal ribosomal protein uS14 family. As to quaternary structure, part of the 30S ribosomal subunit. Contacts proteins S3 and S10.

In terms of biological role, binds 16S rRNA, required for the assembly of 30S particles and may also be responsible for determining the conformation of the 16S rRNA at the A site. This is Small ribosomal subunit protein uS14 from Shewanella amazonensis (strain ATCC BAA-1098 / SB2B).